A 352-amino-acid chain; its full sequence is Ion-translocating oxidoreductase complex subunit D (352 aa).

The next 4 membrane-spanning stretches (helical) occupy residues 20 to 40 (IMLLVLIAALPGIAAQTWFFG), 42 to 62 (GTLFQIVLAAITALVAEAIVL), 69 to 91 (VASHLQDYSALLTGLLLAVSIPP), and 123 to 143 (PAMIGYVVLLISFPVQMTSWL). At Thr187 the chain carries FMN phosphoryl threonine. Transmembrane regions (helical) follow at residues 215-235 (LAGVGWQWVNLAWLVGGVFLL), 242-262 (WHIPVSFLLTLALCAALGWLF), 267-287 (LASPQLHLLSGATMLGAFFIL), 301-321 (LIFGALAGVLVWLIRSFGGYP), and 322-342 (DGVAFAVLLANITVPLIDYYT).

The protein belongs to the NqrB/RnfD family. In terms of assembly, the complex is composed of six subunits: RsxA, RsxB, RsxC, RsxD, RsxE and RsxG. It depends on FMN as a cofactor.

The protein localises to the cell inner membrane. Its function is as follows. Part of a membrane-bound complex that couples electron transfer with translocation of ions across the membrane. Required to maintain the reduced state of SoxR. The polypeptide is Ion-translocating oxidoreductase complex subunit D (Salmonella choleraesuis (strain SC-B67)).